The primary structure comprises 166 residues: Lipoprotein signal peptidase (166 aa).

A run of 4 helical transmembrane segments spans residues 9–29 (ASGA…FDQL), 45–65 (ALTS…FGFL), 71–91 (WQRW…CYLL), and 99–119 (LFSL…IDRL). Residues D126 and D144 contribute to the active site. Residues 135-155 (WHFPAFNLADSAITVGAVLLI) traverse the membrane as a helical segment.

It belongs to the peptidase A8 family.

Its subcellular location is the cell inner membrane. It catalyses the reaction Release of signal peptides from bacterial membrane prolipoproteins. Hydrolyzes -Xaa-Yaa-Zaa-|-(S,diacylglyceryl)Cys-, in which Xaa is hydrophobic (preferably Leu), and Yaa (Ala or Ser) and Zaa (Gly or Ala) have small, neutral side chains.. It participates in protein modification; lipoprotein biosynthesis (signal peptide cleavage). In terms of biological role, this protein specifically catalyzes the removal of signal peptides from prolipoproteins. This is Lipoprotein signal peptidase from Burkholderia vietnamiensis (strain G4 / LMG 22486) (Burkholderia cepacia (strain R1808)).